The chain runs to 308 residues: 1D-myo-inositol 2-acetamido-2-deoxy-alpha-D-glucopyranoside deacetylase (308 aa).

The Zn(2+) site is built by H37, D40, and H171.

The protein belongs to the MshB deacetylase family. It depends on Zn(2+) as a cofactor.

The catalysed reaction is 1D-myo-inositol 2-acetamido-2-deoxy-alpha-D-glucopyranoside + H2O = 1D-myo-inositol 2-amino-2-deoxy-alpha-D-glucopyranoside + acetate. In terms of biological role, catalyzes the deacetylation of 1D-myo-inositol 2-acetamido-2-deoxy-alpha-D-glucopyranoside (GlcNAc-Ins) in the mycothiol biosynthesis pathway. The protein is 1D-myo-inositol 2-acetamido-2-deoxy-alpha-D-glucopyranoside deacetylase of Mycobacterium sp. (strain JLS).